A 174-amino-acid chain; its full sequence is CD164 sialomucin-like 2 protein (174 aa).

An N-terminal signal peptide occupies residues 1–29 (MEAPGPRALRTALCGGCCCLLLCAQLAVA). Topologically, residues 30–141 (GKGARGFGRG…AHSPGFDGAS (112 aa)) are extracellular. N-linked (GlcNAc...) asparagine glycans are attached at residues N71 and N103. Residues 142–162 (FIGGVVLVLSLQAVAFFVLHF) traverse the membrane as a helical segment. Over 163–174 (LKAKDSTYQTLI) the chain is Cytoplasmic.

Belongs to the CD164 family.

It localises to the membrane. This chain is CD164 sialomucin-like 2 protein (CD164L2), found in Homo sapiens (Human).